We begin with the raw amino-acid sequence, 288 residues long: Eukaryotic translation initiation factor 3 subunit G (288 aa).

2 disordered regions span residues 1-33 and 156-197; these read MSKL…NKDG and DEPT…GGER. The RRM domain occupies 208–286; that stretch reads ATLRVTNVSE…LILRVEFAKR (79 aa).

Belongs to the eIF-3 subunit G family. As to quaternary structure, component of the eukaryotic translation initiation factor 3 (eIF-3) complex.

Its subcellular location is the cytoplasm. In terms of biological role, RNA-binding component of the eukaryotic translation initiation factor 3 (eIF-3) complex, which is involved in protein synthesis of a specialized repertoire of mRNAs and, together with other initiation factors, stimulates binding of mRNA and methionyl-tRNAi to the 40S ribosome. The eIF-3 complex specifically targets and initiates translation of a subset of mRNAs involved in cell proliferation. This subunit can bind 18S rRNA. This chain is Eukaryotic translation initiation factor 3 subunit G (tif35), found in Aspergillus niger (strain ATCC MYA-4892 / CBS 513.88 / FGSC A1513).